A 600-amino-acid polypeptide reads, in one-letter code: Proline--tRNA ligase (600 aa).

It belongs to the class-II aminoacyl-tRNA synthetase family. ProS type 1 subfamily. In terms of assembly, homodimer.

It is found in the cytoplasm. It catalyses the reaction tRNA(Pro) + L-proline + ATP = L-prolyl-tRNA(Pro) + AMP + diphosphate. Its function is as follows. Catalyzes the attachment of proline to tRNA(Pro) in a two-step reaction: proline is first activated by ATP to form Pro-AMP and then transferred to the acceptor end of tRNA(Pro). As ProRS can inadvertently accommodate and process non-cognate amino acids such as alanine and cysteine, to avoid such errors it has two additional distinct editing activities against alanine. One activity is designated as 'pretransfer' editing and involves the tRNA(Pro)-independent hydrolysis of activated Ala-AMP. The other activity is designated 'posttransfer' editing and involves deacylation of mischarged Ala-tRNA(Pro). The misacylated Cys-tRNA(Pro) is not edited by ProRS. The chain is Proline--tRNA ligase from Prochlorococcus marinus (strain MIT 9515).